Consider the following 239-residue polypeptide: 1-(5-phosphoribosyl)-5-[(5-phosphoribosylamino)methylideneamino] imidazole-4-carboxamide isomerase (239 aa).

Asp9 (proton acceptor) is an active-site residue. Asp131 functions as the Proton donor in the catalytic mechanism.

This sequence belongs to the HisA/HisF family.

Its subcellular location is the cytoplasm. The enzyme catalyses 1-(5-phospho-beta-D-ribosyl)-5-[(5-phospho-beta-D-ribosylamino)methylideneamino]imidazole-4-carboxamide = 5-[(5-phospho-1-deoxy-D-ribulos-1-ylimino)methylamino]-1-(5-phospho-beta-D-ribosyl)imidazole-4-carboxamide. It functions in the pathway amino-acid biosynthesis; L-histidine biosynthesis; L-histidine from 5-phospho-alpha-D-ribose 1-diphosphate: step 4/9. This is 1-(5-phosphoribosyl)-5-[(5-phosphoribosylamino)methylideneamino] imidazole-4-carboxamide isomerase from Phocaeicola vulgatus (strain ATCC 8482 / DSM 1447 / JCM 5826 / CCUG 4940 / NBRC 14291 / NCTC 11154) (Bacteroides vulgatus).